A 150-amino-acid polypeptide reads, in one-letter code: UPF0756 membrane protein Dd1591_2981 (150 aa).

Transmembrane regions (helical) follow at residues 10 to 32, 51 to 71, 88 to 108, and 127 to 147; these read ILLALAALGIISQNMTVTLAILF, YGLSFGVLVLTIGVMAPIASG, LMAVAIGVAVSWLGGRGVVLM, and ALFRGVPVGPLIAAGLLSLLI.

This sequence belongs to the UPF0756 family.

The protein localises to the cell membrane. This is UPF0756 membrane protein Dd1591_2981 from Dickeya chrysanthemi (strain Ech1591) (Dickeya zeae (strain Ech1591)).